Here is a 179-residue protein sequence, read N- to C-terminus: uncharacterized protein (179 aa).

It localises to the virion. This is an uncharacterized protein from Acanthamoeba polyphaga (Amoeba).